The chain runs to 395 residues: Chorismate synthase (395 aa).

2 residues coordinate NADP(+): Arg-40 and Arg-46. Residues 135–137 and 256–257 contribute to the FMN site; these read RAS and QA. Positions 272-283 are enriched in basic and acidic residues; that stretch reads RRGSQAHDEMRP. Residues 272 to 296 are disordered; the sequence is RRGSQAHDEMRPGPDGILRSTNRAG. Residues Gly-300, 315 to 319, and Arg-341 each bind FMN; that span reads KPIST.

This sequence belongs to the chorismate synthase family. In terms of assembly, homotetramer. The cofactor is FMNH2.

It carries out the reaction 5-O-(1-carboxyvinyl)-3-phosphoshikimate = chorismate + phosphate. Its pathway is metabolic intermediate biosynthesis; chorismate biosynthesis; chorismate from D-erythrose 4-phosphate and phosphoenolpyruvate: step 7/7. Functionally, catalyzes the anti-1,4-elimination of the C-3 phosphate and the C-6 proR hydrogen from 5-enolpyruvylshikimate-3-phosphate (EPSP) to yield chorismate, which is the branch point compound that serves as the starting substrate for the three terminal pathways of aromatic amino acid biosynthesis. This reaction introduces a second double bond into the aromatic ring system. The chain is Chorismate synthase from Rhodococcus opacus (strain B4).